Consider the following 369-residue polypeptide: Septin-5 (369 aa).

At Thr-13 the chain carries Phosphothreonine. The Septin-type G domain occupies 41–314 (KGFDFTLMVA…ENYRAHCIQQ (274 aa)). A G1 motif region spans residues 51–58 (GESGLGKS). Residues 51-58 (GESGLGKS), Thr-85, and Gly-111 each bind GTP. Positions 108-111 (DTPG) are G3 motif. Position 168 is an omega-N-methylarginine (Arg-168). The tract at residues 189 to 192 (AKAD) is G4 motif. A GTP-binding site is contributed by 190-198 (KADCLVPSE). Ser-225 carries the post-translational modification Phosphoserine. GTP-binding residues include Gly-248 and Arg-263. The residue at position 327 (Ser-327) is a Phosphoserine. Phosphothreonine is present on Thr-336. A coiled-coil region spans residues 338 to 369 (DSETEKLIRMKDEELRRMQEMLQKMKQRMQDQ).

This sequence belongs to the TRAFAC class TrmE-Era-EngA-EngB-Septin-like GTPase superfamily. Septin GTPase family. As to quaternary structure, septins polymerize into heterooligomeric protein complexes that form filaments, and can associate with cellular membranes, actin filaments and microtubules. GTPase activity is required for filament formation. Interacts with SEPTIN2 and SEPTIN5. In platelets, associated with a complex containing STX4. Interacts with PRKN; this interaction leads to SEPTIN5 ubiquitination and degradation. Interacts with DYRK1A. Interacts with STX1A; in the cerebellar cortex. In terms of processing, phosphorylated by DYRK1A. As to expression, expressed in brain and testis and at lower level in heart, spleen, lung and kidney.

The protein resides in the cytoplasm. The protein localises to the cytoskeleton. In terms of biological role, filament-forming cytoskeletal GTPase. May play a role in cytokinesis (Potential). May play a role in platelet secretion. This chain is Septin-5, found in Rattus norvegicus (Rat).